Here is a 161-residue protein sequence, read N- to C-terminus: MKYDTSDLCDIYHEEVNVVEPLFSNFGGRTSFGGKITTVKCFEDNGLLFDLLEENGLGRVLVVDGGGSVRRALINAELADLALKNEWEGIVVYGAVRQVDELAELDIGIQAMAAIPVGAADEGIGESDIRVNFGGVTFFSGDHLYADNTGIILSEEPLDIE.

The protein belongs to the RraA family. Homotrimer. Binds to both RNA-binding sites in the C-terminal region of Rne and to RhlB.

It localises to the cytoplasm. Its function is as follows. Globally modulates RNA abundance by binding to RNase E (Rne) and regulating its endonucleolytic activity. Can modulate Rne action in a substrate-dependent manner by altering the composition of the degradosome. Modulates RNA-binding and helicase activities of the degradosome. This is Regulator of ribonuclease activity A from Yersinia enterocolitica serotype O:8 / biotype 1B (strain NCTC 13174 / 8081).